A 1339-amino-acid chain; its full sequence is DNA-directed RNA polymerase subunit beta'' (1339 aa).

4 residues coordinate Zn(2+): C226, C299, C306, and C309.

It belongs to the RNA polymerase beta' chain family. RpoC2 subfamily. In plastids the minimal PEP RNA polymerase catalytic core is composed of four subunits: alpha, beta, beta', and beta''. When a (nuclear-encoded) sigma factor is associated with the core the holoenzyme is formed, which can initiate transcription. It depends on Zn(2+) as a cofactor.

It is found in the plastid. The protein resides in the chloroplast. It catalyses the reaction RNA(n) + a ribonucleoside 5'-triphosphate = RNA(n+1) + diphosphate. Functionally, DNA-dependent RNA polymerase catalyzes the transcription of DNA into RNA using the four ribonucleoside triphosphates as substrates. In Cycas taitungensis (Prince sago), this protein is DNA-directed RNA polymerase subunit beta''.